Reading from the N-terminus, the 186-residue chain is Ribosome-recycling factor (186 aa).

It belongs to the RRF family.

Its subcellular location is the cytoplasm. Its function is as follows. Responsible for the release of ribosomes from messenger RNA at the termination of protein biosynthesis. May increase the efficiency of translation by recycling ribosomes from one round of translation to another. In Beijerinckia indica subsp. indica (strain ATCC 9039 / DSM 1715 / NCIMB 8712), this protein is Ribosome-recycling factor.